A 175-amino-acid polypeptide reads, in one-letter code: MLDLGLSKMALIGVVALVVLGPERLPRVARTAGALFGRAQRYINDVKAEVSREIELDALRTMKTDFEQAARNVENTIHDNLREHERDLNAAWNSAVSPGGSAAADAPDGPSAASGELSWRTIATAPAKRRNWRVKKAVTPVWYKRATMRRTQVQSGAARVARHRPASLRRPARFL.

Residues 1 to 21 form a helical membrane-spanning segment; the sequence is MLDLGLSKMALIGVVALVVLG. Disordered regions lie at residues 96-115 and 153-175; these read VSPGGSAAADAPDGPSAASG and VQSGAARVARHRPASLRRPARFL. The span at 160–175 shows a compositional bias: basic residues; it reads VARHRPASLRRPARFL.

The protein belongs to the TatB family. As to quaternary structure, the Tat system comprises two distinct complexes: a TatABC complex, containing multiple copies of TatA, TatB and TatC subunits, and a separate TatA complex, containing only TatA subunits. Substrates initially bind to the TatABC complex, which probably triggers association of the separate TatA complex to form the active translocon.

It localises to the cell inner membrane. Part of the twin-arginine translocation (Tat) system that transports large folded proteins containing a characteristic twin-arginine motif in their signal peptide across membranes. Together with TatC, TatB is part of a receptor directly interacting with Tat signal peptides. TatB may form an oligomeric binding site that transiently accommodates folded Tat precursor proteins before their translocation. The sequence is that of Sec-independent protein translocase protein TatB from Burkholderia mallei (strain ATCC 23344).